Here is a 343-residue protein sequence, read N- to C-terminus: Pseudaminic acid synthase (343 aa).

The 57-residue stretch at 287–343 folds into the AFP-like domain; that stretch reads SLYASKDIKKGEIFSEENVKSVRPSFGLHPKFYQELLGKKASKDIEFGDALKESDFR.

It belongs to the pseudaminic acid synthase family. A divalent metal cation is required as a cofactor.

The enzyme catalyses 2,4-diacetamido-2,4,6-trideoxy-beta-L-altrose + phosphoenolpyruvate + H2O = pseudaminate + phosphate. Its function is as follows. Catalyzes the fifth step in the biosynthesis of pseudaminic acid, a sialic-acid-like sugar that is used to modify flagellin. Catalyzes the condensation of phosphoenolpyruvate with 2,4-diacetamido-2,4,6-trideoxy-beta-l-altropyranose, forming pseudaminic acid. In Campylobacter jejuni subsp. jejuni serotype O:23/36 (strain 81-176), this protein is Pseudaminic acid synthase (pseI).